Reading from the N-terminus, the 460-residue chain is Cysteine--tRNA ligase (460 aa).

Position 28 (Cys-28) interacts with Zn(2+). Residues 30–40 (MTVYDYCHLGH) carry the 'HIGH' region motif. Zn(2+) is bound by residues Cys-209, His-234, and Glu-238. A 'KMSKS' region motif is present at residues 266-270 (KMSKS). Lys-269 contacts ATP.

Belongs to the class-I aminoacyl-tRNA synthetase family. In terms of assembly, monomer. Requires Zn(2+) as cofactor.

It is found in the cytoplasm. It carries out the reaction tRNA(Cys) + L-cysteine + ATP = L-cysteinyl-tRNA(Cys) + AMP + diphosphate. The sequence is that of Cysteine--tRNA ligase from Pseudomonas paraeruginosa (strain DSM 24068 / PA7) (Pseudomonas aeruginosa (strain PA7)).